Consider the following 297-residue polypeptide: MKMKRTASSNSEAQSYNESPHSPLRFHSPLSDAGDLPESRYVSPEGSPFKIENPKSIVAGNKLTQFSPLPSPIPPPPPQFPPPRRQRNARVPMNSSSDKSPSSMVVHNSWVREDGGQTTTRKAGAPINGEESTRTTVNRARGDDLVSLTALGFRITEVILCVISFSIMAADKTQGWSGDSYDRYKEYRYCLAVNVIAFVYSAFEACDAACYIAKESYMINCGFHDLFVFSMDQLLAYLLMSASSCAATRVDDWVSNWGKDEFTQMATASIAVSFLAFGAFAVSALISSYRLFTHASS.

The segment covering 1–20 (MKMKRTASSNSEAQSYNESP) has biased composition (polar residues). The disordered stretch occupies residues 1 to 135 (MKMKRTASSN…PINGEESTRT (135 aa)). The Cytoplasmic segment spans residues 1-149 (MKMKRTASSN…ARGDDLVSLT (149 aa)). The span at 69–83 (LPSPIPPPPPQFPPP) shows a compositional bias: pro residues. A helical transmembrane segment spans residues 150 to 170 (ALGFRITEVILCVISFSIMAA). At 171 to 191 (DKTQGWSGDSYDRYKEYRYCL) the chain is on the extracellular side. Residues 192 to 212 (AVNVIAFVYSAFEACDAACYI) form a helical membrane-spanning segment. Residues 213–225 (AKESYMINCGFHD) lie on the Cytoplasmic side of the membrane. Residues 226-246 (LFVFSMDQLLAYLLMSASSCA) form a helical membrane-spanning segment. Topologically, residues 247–265 (ATRVDDWVSNWGKDEFTQM) are extracellular. The helical transmembrane segment at 266–286 (ATASIAVSFLAFGAFAVSALI) threads the bilayer. At 287–297 (SSYRLFTHASS) the chain is on the cytoplasmic side.

Belongs to the Casparian strip membrane proteins (CASP) family. In terms of assembly, homodimer and heterodimers.

It is found in the cell membrane. In Arabidopsis thaliana (Mouse-ear cress), this protein is CASP-like protein 4A2.